Reading from the N-terminus, the 1300-residue chain is Serine protease EspP (1300 aa).

An N-terminal signal peptide occupies residues 1-55 (MNKIYSLKYSHITGGLIAVSELSGRVSSRATGKKKHKRILALCFLGLLQSSYSFA). In terms of domain architecture, Peptidase S6 spans 57–311 (QMDISNFYIR…NQTTIDNLKN (255 aa)). Residues H127, D156, and S263 each act as charge relay system in the active site. One can recognise an Autotransporter domain in the interval 1034–1300 (DINGEAGAWA…AVNANFRYSF (267 aa)).

Cleaved to release the mature protein from the outer membrane.

The protein resides in the periplasm. It localises to the secreted. The protein localises to the cell surface. Its subcellular location is the cell outer membrane. In terms of biological role, serine protease with cytotoxic effect. Disrupts actin cytoskeleton resulting cell detachment in vitro. The chain is Serine protease EspP (espP) from Escherichia coli.